The primary structure comprises 228 residues: ATP synthase subunit a (228 aa).

6 consecutive transmembrane segments (helical) span residues 14–34, 71–91, 101–121, 139–159, 165–185, and 188–208; these read YFLL…WLFF, WVPI…LGLL, ISLT…LGFY, FLLP…PIAL, ANLT…WVLM, and VAIA…EIGV.

The protein belongs to the ATPase A chain family. As to quaternary structure, F-type ATPases have 2 components, CF(1) - the catalytic core - and CF(0) - the membrane proton channel. CF(1) has five subunits: alpha(3), beta(3), gamma(1), delta(1), epsilon(1). CF(0) has three main subunits: a, b and c.

It localises to the mitochondrion inner membrane. In terms of biological role, mitochondrial membrane ATP synthase (F(1)F(0) ATP synthase or Complex V) produces ATP from ADP in the presence of a proton gradient across the membrane which is generated by electron transport complexes of the respiratory chain. F-type ATPases consist of two structural domains, F(1) - containing the extramembraneous catalytic core and F(0) - containing the membrane proton channel, linked together by a central stalk and a peripheral stalk. During catalysis, ATP synthesis in the catalytic domain of F(1) is coupled via a rotary mechanism of the central stalk subunits to proton translocation. Key component of the proton channel; it may play a direct role in the translocation of protons across the membrane. The sequence is that of ATP synthase subunit a (ATP6) from Pisaster ochraceus (Ochre sea star).